The following is a 102-amino-acid chain: ATP-dependent Clp protease adapter protein ClpS (102 aa).

The protein belongs to the ClpS family. Binds to the N-terminal domain of the chaperone ClpA.

Involved in the modulation of the specificity of the ClpAP-mediated ATP-dependent protein degradation. The polypeptide is ATP-dependent Clp protease adapter protein ClpS (Shewanella sp. (strain ANA-3)).